Reading from the N-terminus, the 251-residue chain is MMKYRQKDDKMNFENENALFKKALEEKEKGNYDDAIYYLDWASLIAFAKGNLQKIKEIEKILSELVEKTDYLSLYASFFIKITNSILKKEKLPNNIIDEFFEAIEGIEEKDKEFKFVVMALKRIVNYMEPMNQKVPEWIYEWIEDKEEMIKEVEKFNPEKDKVLIQSKDFKKGFVTGTFIGGELDKSKMKIVERAKMMFGIIEVDGAVIEIPLMAMNFTGGIFRAKGVKNEEHLNKIIKTIEDLMIDSYFY.

This is an uncharacterized protein from Methanocaldococcus jannaschii (strain ATCC 43067 / DSM 2661 / JAL-1 / JCM 10045 / NBRC 100440) (Methanococcus jannaschii).